The primary structure comprises 666 residues: 1-deoxy-D-xylulose-5-phosphate synthase (666 aa).

Thiamine diphosphate contacts are provided by residues H103 and 144-146 (AHS). D175 lines the Mg(2+) pocket. Thiamine diphosphate-binding positions include 176–177 (GA), N204, Y314, and E396. N204 lines the Mg(2+) pocket.

The protein belongs to the transketolase family. DXPS subfamily. Homodimer. Requires Mg(2+) as cofactor. Thiamine diphosphate is required as a cofactor.

It carries out the reaction D-glyceraldehyde 3-phosphate + pyruvate + H(+) = 1-deoxy-D-xylulose 5-phosphate + CO2. The protein operates within metabolic intermediate biosynthesis; 1-deoxy-D-xylulose 5-phosphate biosynthesis; 1-deoxy-D-xylulose 5-phosphate from D-glyceraldehyde 3-phosphate and pyruvate: step 1/1. In terms of biological role, catalyzes the acyloin condensation reaction between C atoms 2 and 3 of pyruvate and glyceraldehyde 3-phosphate to yield 1-deoxy-D-xylulose-5-phosphate (DXP). The chain is 1-deoxy-D-xylulose-5-phosphate synthase from Nitrobacter winogradskyi (strain ATCC 25391 / DSM 10237 / CIP 104748 / NCIMB 11846 / Nb-255).